The sequence spans 434 residues: Gamma-enolase (434 aa).

Substrate-binding residues include H158 and E167. The active-site Proton donor is the E210. The Mg(2+) site is built by D245, E293, and D318. Substrate contacts are provided by E293 and D318. The active-site Proton acceptor is the K343. Substrate-binding positions include 370–373 (SHRS) and K394.

The protein belongs to the enolase family. In terms of assembly, homodimer. Mg(2+) serves as cofactor. In terms of tissue distribution, expressed in the brain and, to much less but significant extents, in the pituitary and adrenal glands.

The protein localises to the cytoplasm. The enzyme catalyses (2R)-2-phosphoglycerate = phosphoenolpyruvate + H2O. The protein operates within carbohydrate degradation; glycolysis; pyruvate from D-glyceraldehyde 3-phosphate: step 4/5. In Gallus gallus (Chicken), this protein is Gamma-enolase (ENO2).